Consider the following 248-residue polypeptide: Octanoyltransferase (248 aa).

One can recognise a BPL/LPL catalytic domain in the interval 53–234 (ADTVDEIWIV…RLIANLDGES (182 aa)). Substrate contacts are provided by residues 93-100 (RGGQITYH), 165-167 (ALG), and 178-180 (GLS). C196 (acyl-thioester intermediate) is an active-site residue.

The protein belongs to the LipB family.

Its subcellular location is the cytoplasm. It carries out the reaction octanoyl-[ACP] + L-lysyl-[protein] = N(6)-octanoyl-L-lysyl-[protein] + holo-[ACP] + H(+). Its pathway is protein modification; protein lipoylation via endogenous pathway; protein N(6)-(lipoyl)lysine from octanoyl-[acyl-carrier-protein]: step 1/2. Its function is as follows. Catalyzes the transfer of endogenously produced octanoic acid from octanoyl-acyl-carrier-protein onto the lipoyl domains of lipoate-dependent enzymes. Lipoyl-ACP can also act as a substrate although octanoyl-ACP is likely to be the physiological substrate. The protein is Octanoyltransferase of Burkholderia multivorans (strain ATCC 17616 / 249).